The chain runs to 513 residues: Secreted LysM effector Vd6LysM (513 aa).

Residues 1–19 (MSFIKSLLLAAAAVASVSA) form the signal peptide. LysM domains lie at 38–85 (SYWV…SYCV), 136–182 (KFHW…NVCV), 219–265 (KFHW…QVCV), and 302–348 (KFHW…QVCV). The span at 357-367 (TTTRPPTTTAP) shows a compositional bias: low complexity. Residues 357-377 (TTTRPPTTTAPGNGVSTPQPT) form a disordered region. LysM domains lie at 387–433 (KFHW…NVCV) and 465–511 (KFHW…NVCV).

It belongs to the secreted LysM effector family.

Functionally, might have a role in sequestration of chitin oligosaccharides (breakdown products of fungal cell walls that are released during invasion and act as triggers of host immunity) to dampen host defense. Does not play an important role during host colonization. The polypeptide is Secreted LysM effector Vd6LysM (Verticillium dahliae (strain VdLs.17 / ATCC MYA-4575 / FGSC 10137) (Verticillium wilt)).